Here is a 271-residue protein sequence, read N- to C-terminus: Adenosylcobinamide-GDP ribazoletransferase (271 aa).

7 helical membrane passes run 4-24 (FLLA…GMSM), 35-55 (YLQT…AYLT), 58-78 (FLPS…ITGL), 108-128 (SLGI…YASI), 135-155 (VLFF…IAEI), 192-212 (FVLG…IGYI), and 246-266 (IIVL…YGGL).

Belongs to the CobS family. Mg(2+) is required as a cofactor.

The protein localises to the cell membrane. It carries out the reaction alpha-ribazole + adenosylcob(III)inamide-GDP = adenosylcob(III)alamin + GMP + H(+). The enzyme catalyses alpha-ribazole 5'-phosphate + adenosylcob(III)inamide-GDP = adenosylcob(III)alamin 5'-phosphate + GMP + H(+). The protein operates within cofactor biosynthesis; adenosylcobalamin biosynthesis; adenosylcobalamin from cob(II)yrinate a,c-diamide: step 7/7. Its function is as follows. Joins adenosylcobinamide-GDP and alpha-ribazole to generate adenosylcobalamin (Ado-cobalamin). Also synthesizes adenosylcobalamin 5'-phosphate from adenosylcobinamide-GDP and alpha-ribazole 5'-phosphate. The chain is Adenosylcobinamide-GDP ribazoletransferase from Methanococcoides burtonii (strain DSM 6242 / NBRC 107633 / OCM 468 / ACE-M).